Here is a 156-residue protein sequence, read N- to C-terminus: 6,7-dimethyl-8-ribityllumazine synthase (156 aa).

5-amino-6-(D-ribitylamino)uracil is bound by residues Phe-22, 57–59, and 81–83; these read AYE and TVI. 86-87 contributes to the (2S)-2-hydroxy-3-oxobutyl phosphate binding site; the sequence is GT. His-89 functions as the Proton donor in the catalytic mechanism. Phe-114 provides a ligand contact to 5-amino-6-(D-ribitylamino)uracil. Arg-128 is a (2S)-2-hydroxy-3-oxobutyl phosphate binding site.

Belongs to the DMRL synthase family. Forms an icosahedral capsid composed of 60 subunits, arranged as a dodecamer of pentamers.

The enzyme catalyses (2S)-2-hydroxy-3-oxobutyl phosphate + 5-amino-6-(D-ribitylamino)uracil = 6,7-dimethyl-8-(1-D-ribityl)lumazine + phosphate + 2 H2O + H(+). Its pathway is cofactor biosynthesis; riboflavin biosynthesis; riboflavin from 2-hydroxy-3-oxobutyl phosphate and 5-amino-6-(D-ribitylamino)uracil: step 1/2. In terms of biological role, catalyzes the formation of 6,7-dimethyl-8-ribityllumazine by condensation of 5-amino-6-(D-ribitylamino)uracil with 3,4-dihydroxy-2-butanone 4-phosphate. This is the penultimate step in the biosynthesis of riboflavin. The protein is 6,7-dimethyl-8-ribityllumazine synthase of Photorhabdus laumondii subsp. laumondii (strain DSM 15139 / CIP 105565 / TT01) (Photorhabdus luminescens subsp. laumondii).